We begin with the raw amino-acid sequence, 374 residues long: S-adenosylmethionine:tRNA ribosyltransferase-isomerase (374 aa).

The protein belongs to the QueA family. In terms of assembly, monomer.

It localises to the cytoplasm. The enzyme catalyses 7-aminomethyl-7-carbaguanosine(34) in tRNA + S-adenosyl-L-methionine = epoxyqueuosine(34) in tRNA + adenine + L-methionine + 2 H(+). It participates in tRNA modification; tRNA-queuosine biosynthesis. In terms of biological role, transfers and isomerizes the ribose moiety from AdoMet to the 7-aminomethyl group of 7-deazaguanine (preQ1-tRNA) to give epoxyqueuosine (oQ-tRNA). In Prochlorococcus marinus (strain MIT 9301), this protein is S-adenosylmethionine:tRNA ribosyltransferase-isomerase.